Reading from the N-terminus, the 104-residue chain is Phosphoribosyl-ATP pyrophosphatase (104 aa).

The protein belongs to the PRA-PH family.

The protein resides in the cytoplasm. It catalyses the reaction 1-(5-phospho-beta-D-ribosyl)-ATP + H2O = 1-(5-phospho-beta-D-ribosyl)-5'-AMP + diphosphate + H(+). The protein operates within amino-acid biosynthesis; L-histidine biosynthesis; L-histidine from 5-phospho-alpha-D-ribose 1-diphosphate: step 2/9. This is Phosphoribosyl-ATP pyrophosphatase from Streptococcus thermophilus (strain ATCC BAA-491 / LMD-9).